A 61-amino-acid polypeptide reads, in one-letter code: MAKTSMVAKQQKKQKFAVREYTRCERCGRPHSVYRKFKLCRICFRELAYKGQIPGVRKASW.

The Zn(2+) site is built by Cys-24, Cys-27, Cys-40, and Cys-43.

Belongs to the universal ribosomal protein uS14 family. Zinc-binding uS14 subfamily. As to quaternary structure, part of the 30S ribosomal subunit. Contacts proteins S3 and S10. Zn(2+) serves as cofactor.

Binds 16S rRNA, required for the assembly of 30S particles and may also be responsible for determining the conformation of the 16S rRNA at the A site. The polypeptide is Small ribosomal subunit protein uS14B (Staphylococcus epidermidis (strain ATCC 35984 / DSM 28319 / BCRC 17069 / CCUG 31568 / BM 3577 / RP62A)).